Here is a 206-residue protein sequence, read N- to C-terminus: Thymidylate kinase (206 aa).

Position 11 to 18 (11 to 18) interacts with ATP; it reads GIDGAGKT.

This sequence belongs to the thymidylate kinase family.

It catalyses the reaction dTMP + ATP = dTDP + ADP. Phosphorylation of dTMP to form dTDP in both de novo and salvage pathways of dTTP synthesis. The chain is Thymidylate kinase from Burkholderia lata (strain ATCC 17760 / DSM 23089 / LMG 22485 / NCIMB 9086 / R18194 / 383).